The sequence spans 1394 residues: DNA-directed RNA polymerase subunit beta'' (1394 aa).

Residues Cys224, Cys295, Cys302, and Cys305 each coordinate Zn(2+).

Belongs to the RNA polymerase beta' chain family. RpoC2 subfamily. In plastids the minimal PEP RNA polymerase catalytic core is composed of four subunits: alpha, beta, beta', and beta''. When a (nuclear-encoded) sigma factor is associated with the core the holoenzyme is formed, which can initiate transcription. Zn(2+) is required as a cofactor.

The protein resides in the plastid. Its subcellular location is the chloroplast. The enzyme catalyses RNA(n) + a ribonucleoside 5'-triphosphate = RNA(n+1) + diphosphate. Its function is as follows. DNA-dependent RNA polymerase catalyzes the transcription of DNA into RNA using the four ribonucleoside triphosphates as substrates. In Vitis vinifera (Grape), this protein is DNA-directed RNA polymerase subunit beta''.